Here is a 271-residue protein sequence, read N- to C-terminus: Calcium-binding protein 4 (271 aa).

Residues 1–105 form a disordered region; the sequence is MATEHNVQLV…RSDPQQDAAQ (105 aa). S37 carries the phosphoserine; by PKC/PRKCZ modification. A compositionally biased stretch (low complexity) spans 45–67; sequence GSQKASSGDQSSSQGSEASGSSK. A compositionally biased stretch (basic residues) spans 87 to 96; that stretch reads ASHRHSHRHR. EF-hand domains follow at residues 125-160, 179-196, 202-237, and 239-271; these read EELEELQAAFEEFDTDQDGYIGYRELGDCMRTLGYM, GFVDFEEFVELISPKLRE, LGVRELRIAFREFDKDRDGRITVAELRQAAPALLGE, and LEGTELDEMLREMDLNGDGTIDFDEFVMMLSTG. Ca(2+) contacts are provided by D138, D140, D142, Y144, and E149. The Ca(2+) site is built by D215, D217, D219, R221, E226, D252, N254, D256, T258, and E263.

In terms of assembly, interacts with CACNA1F and CACNA1D (via IQ domain) in a calcium independent manner. Interacts (via N-terminus) with UNC119. In terms of processing, phosphorylated. Phosphorylation levels change with the light conditions and regulate the activity, but has no effect on calcium binding. Expressed in retina and in the inner hair cells (IHC) of the cochlea.

It is found in the cytoplasm. The protein localises to the presynapse. Its function is as follows. Involved in normal synaptic function through regulation of Ca(2+) influx and neurotransmitter release in photoreceptor synaptic terminals and in auditory transmission. Modulator of CACNA1D and CACNA1F, suppressing the calcium-dependent inactivation and shifting the activation range to more hyperpolarized voltages. In Mus musculus (Mouse), this protein is Calcium-binding protein 4 (Cabp4).